We begin with the raw amino-acid sequence, 182 residues long: Small heat shock protein hspG1 (182 aa).

The 140-residue stretch at 43-182 folds into the sHSP domain; it reads IKRIDIIPSM…SNSSFKININ (140 aa).

Belongs to the small heat shock protein (HSP20) family.

This is Small heat shock protein hspG1 (hspG1) from Dictyostelium discoideum (Social amoeba).